The primary structure comprises 174 residues: MTKLPQTQGVLNFIQKYLYNSTNYNFEDGSTQAINVPYPDSGVYENYILHYPDATSTELLDINIDQLYSEVMVLTDPKIERAYEYILEERDPGTSSTNILVTVGVDDIAAFDGSASSYMHQLQQKYNFRSIVVSIGPNPNYLEVLAESPDWYFTATDSNGKWVAEQISRIICHL.

This is an uncharacterized protein from Caenorhabditis elegans.